The primary structure comprises 431 residues: Protein translocase subunit SecY (431 aa).

The next 10 membrane-spanning stretches (helical) occupy residues 18–38, 64–84, 116–136, 146–166, 175–195, 214–234, 262–282, 309–329, 369–389, and 390–410; these read IIFT…PVPH, LFNF…SIII, FTIV…NNMA, VGTY…LMWL, VGNG…PQTI, IIKV…VIFI, LPLK…AFIT, PVGM…YAFV, FVGS…VNIA, and GLPS…GVAL.

It belongs to the SecY/SEC61-alpha family. As to quaternary structure, component of the Sec protein translocase complex. Heterotrimer consisting of SecY, SecE and SecG subunits. The heterotrimers can form oligomers, although 1 heterotrimer is thought to be able to translocate proteins. Interacts with the ribosome. Interacts with SecDF, and other proteins may be involved. Interacts with SecA.

The protein resides in the cell membrane. The central subunit of the protein translocation channel SecYEG. Consists of two halves formed by TMs 1-5 and 6-10. These two domains form a lateral gate at the front which open onto the bilayer between TMs 2 and 7, and are clamped together by SecE at the back. The channel is closed by both a pore ring composed of hydrophobic SecY resides and a short helix (helix 2A) on the extracellular side of the membrane which forms a plug. The plug probably moves laterally to allow the channel to open. The ring and the pore may move independently. In Bacillus licheniformis (strain ATCC 14580 / DSM 13 / JCM 2505 / CCUG 7422 / NBRC 12200 / NCIMB 9375 / NCTC 10341 / NRRL NRS-1264 / Gibson 46), this protein is Protein translocase subunit SecY.